Here is a 495-residue protein sequence, read N- to C-terminus: Cytochrome P450 monooxygenase aneF (495 aa).

A helical transmembrane segment spans residues 1-21 (MIAGLVLVVLLTKYLQRVFLH). Asn-47 is a glycosylation site (N-linked (GlcNAc...) asparagine). Cys-437 is a binding site for heme.

This sequence belongs to the cytochrome P450 family. It depends on heme as a cofactor.

It localises to the membrane. It carries out the reaction dauca-4,7-diene + 3 reduced [NADPH--hemoprotein reductase] + 3 O2 = asperaculane D + 3 oxidized [NADPH--hemoprotein reductase] + 4 H2O + 4 H(+). It participates in secondary metabolite biosynthesis. Its function is as follows. Cytochrome P450 monooxygenase; part of the gene cluster that mediates the biosynthesis of aculenes, a unique type of norsesquiterpenes that contain a nordaucane skeleton linked to an L-proline moiety and are of mixed biosynthetic origin. The pathway begins with the synthesis of dauca-4,7-diene by the terpene cyclase aneC using farnesyl pyrophosphate (FPP) as substrate. The cytochrome P450 monooxygenase aneF then performs the initial oxidation at C-12 of dauca-4,7-diene to yield asperaculane D. Asperaculane D is substrate of the cytochrome P450 monooxygenase aneD for C-10 hydroxylation to yield asperaculane E. The cytochrome P450 monooxygenase aneG then converts asperaculane E into aculene D via C-2 oxidation. The monomodular nonribosomal peptide synthtase aneB adenylates L-proline and the thiohydrolase aneE transfers this activated L-proline derivative to aculenes D and C to produce respectively aculenes B and A. The dioxygenase aneA converts aculene D into aculene C, and aculene B into aculene A by introducing the 5,6-alkene moiety. Asperculanes A, B, C and F, as well as 14-prolyl asperculane C, might be shunt products of the pathway. The protein is Cytochrome P450 monooxygenase aneF of Aspergillus aculeatus (strain ATCC 16872 / CBS 172.66 / WB 5094).